Consider the following 249-residue polypeptide: ATP synthase subunit a (249 aa).

6 helical membrane-spanning segments follow: residues 30–50, 84–104, 114–134, 143–163, 193–213, and 220–240; these read SLYM…GSAG, FFPL…IGVI, LIVT…YGLY, VFVP…IEVI, FVTS…LPLA, and ILEV…TCIY.

The protein belongs to the ATPase A chain family. As to quaternary structure, F-type ATPases have 2 components, CF(1) - the catalytic core - and CF(0) - the membrane proton channel. CF(1) has five subunits: alpha(3), beta(3), gamma(1), delta(1), epsilon(1). CF(0) has three main subunits: a(1), b(2) and c(9-12). The alpha and beta chains form an alternating ring which encloses part of the gamma chain. CF(1) is attached to CF(0) by a central stalk formed by the gamma and epsilon chains, while a peripheral stalk is formed by the delta and b chains.

It is found in the cell inner membrane. Key component of the proton channel; it plays a direct role in the translocation of protons across the membrane. In Afipia carboxidovorans (strain ATCC 49405 / DSM 1227 / KCTC 32145 / OM5) (Oligotropha carboxidovorans), this protein is ATP synthase subunit a.